We begin with the raw amino-acid sequence, 151 residues long: 6,7-dimethyl-8-ribityllumazine synthase (151 aa).

5-amino-6-(D-ribitylamino)uracil is bound by residues F15, 49–51 (AVE), and 73–75 (AVI). 78 to 79 (ET) provides a ligand contact to (2S)-2-hydroxy-3-oxobutyl phosphate. The Proton donor role is filled by H81. F106 provides a ligand contact to 5-amino-6-(D-ribitylamino)uracil. R120 contributes to the (2S)-2-hydroxy-3-oxobutyl phosphate binding site.

This sequence belongs to the DMRL synthase family. Forms an icosahedral capsid composed of 60 subunits, arranged as a dodecamer of pentamers.

It carries out the reaction (2S)-2-hydroxy-3-oxobutyl phosphate + 5-amino-6-(D-ribitylamino)uracil = 6,7-dimethyl-8-(1-D-ribityl)lumazine + phosphate + 2 H2O + H(+). The protein operates within cofactor biosynthesis; riboflavin biosynthesis; riboflavin from 2-hydroxy-3-oxobutyl phosphate and 5-amino-6-(D-ribitylamino)uracil: step 1/2. Catalyzes the formation of 6,7-dimethyl-8-ribityllumazine by condensation of 5-amino-6-(D-ribitylamino)uracil with 3,4-dihydroxy-2-butanone 4-phosphate. This is the penultimate step in the biosynthesis of riboflavin. The polypeptide is 6,7-dimethyl-8-ribityllumazine synthase (Coxiella burnetii (strain CbuG_Q212) (Coxiella burnetii (strain Q212))).